Consider the following 60-residue polypeptide: Putative mercuric resistance protein (60 aa).

This is Putative mercuric resistance protein from Pseudomonas aeruginosa.